We begin with the raw amino-acid sequence, 120 residues long: NAD(P)H-quinone oxidoreductase subunit 3, chloroplastic (120 aa).

The next 3 helical transmembrane spans lie at 9 to 29, 64 to 84, and 88 to 108; these read IFWT…LISG, MFAL…PWAM, and VLGV…IVGS.

It belongs to the complex I subunit 3 family. NDH is composed of at least 16 different subunits, 5 of which are encoded in the nucleus.

It localises to the plastid. The protein resides in the chloroplast thylakoid membrane. The enzyme catalyses a plastoquinone + NADH + (n+1) H(+)(in) = a plastoquinol + NAD(+) + n H(+)(out). It catalyses the reaction a plastoquinone + NADPH + (n+1) H(+)(in) = a plastoquinol + NADP(+) + n H(+)(out). NDH shuttles electrons from NAD(P)H:plastoquinone, via FMN and iron-sulfur (Fe-S) centers, to quinones in the photosynthetic chain and possibly in a chloroplast respiratory chain. The immediate electron acceptor for the enzyme in this species is believed to be plastoquinone. Couples the redox reaction to proton translocation, and thus conserves the redox energy in a proton gradient. This is NAD(P)H-quinone oxidoreductase subunit 3, chloroplastic from Piper cenocladum (Ant piper).